We begin with the raw amino-acid sequence, 129 residues long: Lysozyme C (129 aa).

The C-type lysozyme domain maps to 1–129 (KVFSKCELAH…LSEYLASCNL (129 aa)). Intrachain disulfides connect Cys6-Cys127, Cys30-Cys115, Cys65-Cys80, and Cys76-Cys94. Residues Glu35 and Asp53 contribute to the active site. Ca(2+) is bound by residues Lys82, Asp85, Asn87, Asp90, and Asp91.

The protein belongs to the glycosyl hydrolase 22 family. Monomer. Ca(2+) is required as a cofactor.

It catalyses the reaction Hydrolysis of (1-&gt;4)-beta-linkages between N-acetylmuramic acid and N-acetyl-D-glucosamine residues in a peptidoglycan and between N-acetyl-D-glucosamine residues in chitodextrins.. Functionally, lysozymes have primarily a bacteriolytic function; those in tissues and body fluids are associated with the monocyte-macrophage system and enhance the activity of immunoagents. This Equus asinus (Donkey) protein is Lysozyme C (LYZ).